Here is a 402-residue protein sequence, read N- to C-terminus: Deoxyguanosinetriphosphate triphosphohydrolase-like protein (402 aa).

The disordered stretch occupies residues 20-39; the sequence is PAFSRGRLVPEPESPTRTPF. The HD domain maps to 73 to 217; it reads RLTHTIEVAQ…AAIADDIAYN (145 aa).

The protein belongs to the dGTPase family. Type 2 subfamily.

The protein is Deoxyguanosinetriphosphate triphosphohydrolase-like protein of Brucella ovis (strain ATCC 25840 / 63/290 / NCTC 10512).